The primary structure comprises 102 residues: Large ribosomal subunit protein bL21 (102 aa).

Belongs to the bacterial ribosomal protein bL21 family. As to quaternary structure, part of the 50S ribosomal subunit. Contacts protein L20.

Functionally, this protein binds to 23S rRNA in the presence of protein L20. The protein is Large ribosomal subunit protein bL21 of Exiguobacterium sibiricum (strain DSM 17290 / CCUG 55495 / CIP 109462 / JCM 13490 / 255-15).